A 1362-amino-acid chain; its full sequence is Insulin receptor (1362 aa).

Positions 1–37 (MGQGVLRGEGHPNNNPNSKVGWKSLVGIITIFMLILC) are cleaved as a signal peptide. Positions 38–184 (DQSDGKICYS…DSVEDNYIEL (147 aa)) are leucine-rich region. Cysteine 45 and cysteine 63 are oxidised to a cystine. 3 N-linked (GlcNAc...) asparagine glycosylation sites follow: asparagine 53, asparagine 115, and asparagine 148. Disulfide bonds link cysteine 163–cysteine 192, cysteine 196–cysteine 219, cysteine 206–cysteine 225, cysteine 229–cysteine 238, cysteine 233–cysteine 244, cysteine 245–cysteine 253, cysteine 249–cysteine 262, cysteine 265–cysteine 274, cysteine 278–cysteine 290, cysteine 296–cysteine 321, cysteine 303–cysteine 311, cysteine 325–cysteine 338, cysteine 341–cysteine 345, and cysteine 349–cysteine 370. The N-linked (GlcNAc...) asparagine glycan is linked to asparagine 332. 3 N-linked (GlcNAc...) asparagine glycosylation sites follow: asparagine 374, asparagine 434, and asparagine 455. Residues cysteine 472 and cysteine 505 are joined by a disulfide bond. 2 consecutive Fibronectin type-III domains span residues 508-629 (NLLT…TNET) and 633-730 (VPLD…IQKE). Asparagine 551, asparagine 627, asparagine 642, asparagine 660, and asparagine 707 each carry an N-linked (GlcNAc...) asparagine glycan. Cystine bridges form between cysteine 683-cysteine 896 and cysteine 822-cysteine 830. The segment at 694-714 (WTPPTEIDENGNENQTEHTSV) is disordered. The span at 705–714 (NENQTEHTSV) shows a compositional bias: polar residues. The insulin-binding stretch occupies residues 741 to 749 (ENYLHNEVF). Residues 759–951 (DLFGVANGTL…PDHPHSNIVK (193 aa)) are Extracellular-facing. 2 N-linked (GlcNAc...) asparagine glycosylation sites follow: asparagine 765 and asparagine 779. A Fibronectin type-III 3 domain is found at 849–944 (VVGPITYEYV…EQAYFQVPDH (96 aa)). Residues asparagine 917 and asparagine 930 are each glycosylated (N-linked (GlcNAc...) asparagine). A helical transmembrane segment spans residues 952 to 972 (IITGPIIAVFLLLIVLVYCVV). Topologically, residues 973–1362 (QKKKDAEGPA…ILSLPRSSPS (390 aa)) are cytoplasmic. Tyrosine 993 carries the phosphotyrosine; by autocatalysis modification. The Protein kinase domain occupies 1012–1287 (INLLRELGQG…MLKDDLRPSF (276 aa)). ATP is bound by residues serine 1022, lysine 1046, and 1093–1099 (ELMAHGD). Aspartate 1148 acts as the Proton donor/acceptor in catalysis. ATP-binding positions include 1152-1153 (RN) and aspartate 1166. Phosphotyrosine; by autocatalysis is present on residues tyrosine 1174, tyrosine 1178, tyrosine 1179, tyrosine 1335, and tyrosine 1341.

Belongs to the protein kinase superfamily. Tyr protein kinase family. Insulin receptor subfamily. Tetramer of 2 alpha and 2 beta chains linked by disulfide bonds. The alpha chains contribute to the formation of the ligand-binding domain, while the beta chains carry the kinase domain. Post-translationally, autophosphorylated on tyrosine residues in response to insulin. Localized mainly to the envelope in oocytes. Localized to the animal hemisphere during early embryonic cleavage. Expressed during organogenesis in regions of ecto- and mesodermic origins. Expressed in the entire encephalon, the otic and optic vesicles, the gills, the somites and the pronephric tubules of the embryo. Also found in adult liver, muscle and regenerated forelimbs.

It localises to the cell membrane. The enzyme catalyses L-tyrosyl-[protein] + ATP = O-phospho-L-tyrosyl-[protein] + ADP + H(+). With respect to regulation, autophosphorylation activates the kinase activity. Functionally, receptor tyrosine kinase which mediates actions of insulin. May be required for forelimb regeneration. The polypeptide is Insulin receptor (insr) (Xenopus laevis (African clawed frog)).